A 115-amino-acid polypeptide reads, in one-letter code: Cholecystokinin (115 aa).

The N-terminal stretch at 1–20 (MNRGVCLCLLMAVLAAGALA) is a signal peptide. The propeptide occupies 21–44 (QPMPHADPTGPRAQQAEEAPRRQL). Residues 21-44 (QPMPHADPTGPRAQQAEEAPRRQL) form a disordered region. A Sulfotyrosine modification is found at tyrosine 97. Phenylalanine 103 bears the Phenylalanine amide mark. The propeptide occupies 107–115 (SAEEFEYTS). Sulfotyrosine is present on tyrosine 113.

The protein belongs to the gastrin/cholecystokinin family. Binds to CCK-A receptors in the pancreas and CCK-B receptors in the brain. In terms of processing, the precursor is cleaved by proteases to produce a number of active cholecystokinins. The precursor is cleaved by ACE, which removes the Gly-Arg-Arg peptide at the C-terminus, leading to mature hormone.

The protein localises to the secreted. In terms of biological role, this peptide hormone induces gall bladder contraction and the release of pancreatic enzymes in the gut. Its function in the brain is not clear. Binding to CCK-A receptors stimulates amylase release from the pancreas, binding to CCK-B receptors stimulates gastric acid secretion. The polypeptide is Cholecystokinin (CCK) (Bos taurus (Bovine)).